We begin with the raw amino-acid sequence, 573 residues long: Sulfite reductase [NADPH] hemoprotein beta-component (573 aa).

Residues cysteine 438, cysteine 444, cysteine 483, and cysteine 487 each contribute to the [4Fe-4S] cluster site. Cysteine 487 lines the siroheme pocket.

It belongs to the nitrite and sulfite reductase 4Fe-4S domain family. Alpha(8)-beta(8). The alpha component is a flavoprotein, the beta component is a hemoprotein. Requires siroheme as cofactor. [4Fe-4S] cluster serves as cofactor.

The enzyme catalyses hydrogen sulfide + 3 NADP(+) + 3 H2O = sulfite + 3 NADPH + 4 H(+). The protein operates within sulfur metabolism; hydrogen sulfide biosynthesis; hydrogen sulfide from sulfite (NADPH route): step 1/1. Component of the sulfite reductase complex that catalyzes the 6-electron reduction of sulfite to sulfide. This is one of several activities required for the biosynthesis of L-cysteine from sulfate. The protein is Sulfite reductase [NADPH] hemoprotein beta-component of Shouchella clausii (strain KSM-K16) (Alkalihalobacillus clausii).